A 450-amino-acid polypeptide reads, in one-letter code: 3-phosphoshikimate 1-carboxyvinyltransferase (450 aa).

Residues 1–26 (MSGHGTPIPMTSRRASPLKGEAHVPG) form a disordered region. Positions 28, 29, and 33 each coordinate 3-phosphoshikimate. Phosphoenolpyruvate is bound at residue Lys-28. Gly-101 and Arg-129 together coordinate phosphoenolpyruvate. 3-phosphoshikimate contacts are provided by Ser-174, Gln-176, Asp-327, and Lys-354. Gln-176 is a binding site for phosphoenolpyruvate. Asp-327 acts as the Proton acceptor in catalysis. Positions 358 and 403 each coordinate phosphoenolpyruvate.

Belongs to the EPSP synthase family. Monomer.

It is found in the cytoplasm. It carries out the reaction 3-phosphoshikimate + phosphoenolpyruvate = 5-O-(1-carboxyvinyl)-3-phosphoshikimate + phosphate. It participates in metabolic intermediate biosynthesis; chorismate biosynthesis; chorismate from D-erythrose 4-phosphate and phosphoenolpyruvate: step 6/7. Functionally, catalyzes the transfer of the enolpyruvyl moiety of phosphoenolpyruvate (PEP) to the 5-hydroxyl of shikimate-3-phosphate (S3P) to produce enolpyruvyl shikimate-3-phosphate and inorganic phosphate. The sequence is that of 3-phosphoshikimate 1-carboxyvinyltransferase from Ruegeria sp. (strain TM1040) (Silicibacter sp.).